The sequence spans 313 residues: 2,3-dihydroxyphenylpropionate/2,3-dihydroxicinnamic acid 1,2-dioxygenase (313 aa).

The active-site Proton donor is the histidine 115. The active-site Proton acceptor is histidine 179.

The protein belongs to the LigB/MhpB extradiol dioxygenase family. In terms of assembly, homotetramer. The cofactor is Fe(2+).

The catalysed reaction is 3-(2,3-dihydroxyphenyl)propanoate + O2 = (2Z,4E)-2-hydroxy-6-oxonona-2,4-dienedioate + H(+). The enzyme catalyses (2E)-3-(2,3-dihydroxyphenyl)prop-2-enoate + O2 = (2Z,4E,7E)-2-hydroxy-6-oxonona-2,4,7-trienedioate + H(+). The protein operates within aromatic compound metabolism; 3-phenylpropanoate degradation. Functionally, catalyzes the non-heme iron(II)-dependent oxidative cleavage of 2,3-dihydroxyphenylpropionic acid and 2,3-dihydroxicinnamic acid into 2-hydroxy-6-ketononadienedioate and 2-hydroxy-6-ketononatrienedioate, respectively. The polypeptide is 2,3-dihydroxyphenylpropionate/2,3-dihydroxicinnamic acid 1,2-dioxygenase (Mycobacterium ulcerans (strain Agy99)).